Here is a 693-residue protein sequence, read N- to C-terminus: Polyribonucleotide nucleotidyltransferase (693 aa).

Mg(2+) contacts are provided by D490 and D496. Positions P557 to I617 constitute a KH domain. Residues G627–L691 form the S1 motif domain.

This sequence belongs to the polyribonucleotide nucleotidyltransferase family. Mg(2+) is required as a cofactor.

The protein localises to the cytoplasm. It catalyses the reaction RNA(n+1) + phosphate = RNA(n) + a ribonucleoside 5'-diphosphate. Involved in mRNA degradation. Catalyzes the phosphorolysis of single-stranded polyribonucleotides processively in the 3'- to 5'-direction. The protein is Polyribonucleotide nucleotidyltransferase of Fervidobacterium nodosum (strain ATCC 35602 / DSM 5306 / Rt17-B1).